Here is a 6885-residue protein sequence, read N- to C-terminus: Nesprin-2 (6885 aa).

The actin-binding stretch occupies residues 1–286 (MASSPELPTE…YVAQFLQYSK (286 aa)). Residues 1–6834 (MASSPELPTE…QRSFLSRVVR (6834 aa)) lie on the Cytoplasmic side of the membrane. Calponin-homology (CH) domains are found at residues 31–136 (DTQK…LHFH) and 181–286 (MSAR…QYSK). Spectrin repeat units lie at residues 297-378 (GKVK…HQIN), 379-472 (AWKI…RINN), 473-575 (ILEK…KNIY), 576-680 (NVKS…KQDQ), 735-838 (VAKD…KNLT), 839-932 (DVSP…LHHE), and 933-1034 (LSLY…KCAS). A coiled-coil region spans residues 297 to 6782 (GKVKDAMGWL…PASPLPSFDE (6486 aa)). S841 carries the post-translational modification Phosphoserine. K955 is modified (N6-acetyllysine). Over residues 1042 to 1059 (PTAGGTSKNEGTITTSEN) the composition is skewed to polar residues. Residues 1042–1084 (PTAGGTSKNEGTITTSENRGGDPHSEAPFAKSDNQPSTEKAME) are disordered. Spectrin repeat units lie at residues 1121 to 1212 (TYRD…TLNT), 1263 to 1323 (NIQD…DTLK), 1324 to 1419 (ALED…YGVQ), 1420 to 1524 (EEFT…ALVT), 1525 to 1636 (ECLE…KTED), 1637 to 1738 (YYEN…TGES), 1739 to 1830 (NCHA…TKKS), 1831 to 1938 (VLQD…AKEL), 1939 to 2036 (EDSL…EEED), 2037 to 2132 (KLLP…LAST), 2133 to 2243 (YLSH…SVQN), and 2244 to 2360 (LDGH…LNSI). The span at 2368-2382 (EKKGKFTLPGREKQA) shows a compositional bias: basic and acidic residues. Residues 2368–2394 (EKKGKFTLPGREKQATSDVQESTQESA) form a disordered region. Polar residues predominate over residues 2383–2393 (TSDVQESTQES). Spectrin repeat units follow at residues 2432-2513 (DERK…TLKK), 2514-2620 (NKES…KYSQ), 2621-2717 (QVVE…ETLE), 2718-2831 (PLHL…QLEF), 2832-2933 (KLEE…FIQN), 2934-3036 (TCNE…EKIK), 3037-3142 (QLDT…NMVL), 3143-3248 (ELSP…DLRT), 3249-3352 (NVLN…AQET), 3353-3465 (EAER…MWCE), 3466-3573 (ELKQ…KVQK), 3574-3679 (NKEL…SNEV), 3680-3777 (LKSS…ECRT), 3778-3880 (SQLN…KIME), 3881-3986 (SLPQ…VTQE), and 3987-4086 (QNEL…LPAV). Phosphoserine is present on S2781. Basic and acidic residues-rich tracts occupy residues 4073 to 4083 (QEQEGVERDRL) and 4093 to 4102 (VAERDASERK). Disordered regions lie at residues 4073 to 4162 (QEQE…SGTI), 4184 to 4232 (DSLN…KTRP), 4335 to 4363 (EKHSEDQHPTILKKSSEPEHQEALQPVNL), and 4416 to 4448 (HDNDTTQESSASNQASSPENDVPDSILSPQGQN). The residue at position 4108 (S4108) is a Phosphoserine. Basic and acidic residues-rich tracts occupy residues 4122 to 4134 (SSVKSDNGDEKAE) and 4144 to 4155 (WKHDKDMEEDRA). One copy of the Spectrin 36 repeat lies at 4229 to 4348 (KTRPEPTEVL…EDQHPTILKK (120 aa)). Over residues 4335–4356 (EKHSEDQHPTILKKSSEPEHQE) the composition is skewed to basic and acidic residues. A compositionally biased stretch (polar residues) spans 4421–4434 (TQESSASNQASSPE). Spectrin repeat units follow at residues 4520–4639 (NMTE…RSYQ), 4640–4727 (NEIK…RARY), 4728–4837 (TELS…QSLL), 4838–4943 (QKWE…QALL), 4944–5051 (KHLL…QEKL), 5052–5164 (HQLQ…KIQH), 5165–5266 (LEQL…TQVN), 5267–5391 (QLKT…KAYS), 5392–5487 (NAHG…MLLV), 5488–5589 (KANE…CSEL), 5590–5704 (QGIG…QWQD), 5705–5799 (FTTS…PQLA), 5800–5907 (EMIK…RVAI), 5908–6017 (RKQE…VKKL), 6018–6135 (KETF…EETW), 6136–6243 (RLWQ…LRHF), and 6244–6355 (TNQR…PGLE). S5785 carries the post-translational modification Phosphoserine. Residues 6354 to 6367 (LEDEKEASENETDM) are compositionally biased toward acidic residues. The tract at residues 6354–6508 (LEDEKEASEN…GTDGGKEGPR (155 aa)) is disordered. A phosphoserine mark is found at S6361, S6384, S6411, S6428, S6429, S6430, and S6459. Basic and acidic residues predominate over residues 6368–6384 (EDPREIQTDSWRKRGES). Spectrin repeat units follow at residues 6461 to 6549 (SCPE…KLKI), 6550 to 6665 (KQNL…QCQD), and 6666 to 6782 (FHQL…SFDE). A compositionally biased stretch (basic and acidic residues) spans 6463–6474 (PEHHYKQMEGDR). Pro residues predominate over residues 6477 to 6489 (PPVPPASSTPYKP). The span at 6490–6499 (PYGKLLLPPG) shows a compositional bias: low complexity. Residues 6769–6824 (GTQNPASPLPSFDEVDSGDQPPATSVPAPRAKQFRAVRTTEGEEETESRVPGSTRP) form a disordered region. One can recognise a KASH domain in the interval 6826 to 6885 (RSFLSRVVRAALPLQLLLLLLLLLACLLPSSEEDYSCTQANNFARSFYPMLRYTNGPPPT). The chain crosses the membrane as a helical; Anchor for type IV membrane protein span at residues 6835 to 6855 (AALPLQLLLLLLLLLACLLPS). Residues 6856–6885 (SEEDYSCTQANNFARSFYPMLRYTNGPPPT) lie on the Perinuclear space side of the membrane. The tract at residues 6872–6885 (FYPMLRYTNGPPPT) is sufficient for interaction with SUN2.

Belongs to the nesprin family. Core component of LINC complexes which are composed of inner nuclear membrane SUN domain-containing proteins coupled to outer nuclear membrane KASH domain-containing nesprins. SUN and KASH domain-containing proteins seem to bind each other promiscuously; however, some LINC complex constituents are tissue- or cell type-specific. At least SUN1/2-containing core LINC complexes are proposed to be hexameric composed of three protomers of each KASH and SUN domain-containing protein. The SUN2:SYNE2/KASH2 complex is a heterohexamer; the homotrimeric cloverleave-like conformation of the SUN domain is a prerequisite for LINC complex formation in which three separate SYNE2/KASH2 peptides bind at the interface of adjacent SUN domains. Interacts with EMD, LMNA, MKS3 and F-actin via its N-terminal domain. Interacts with DCTN1 and DYNC1I1/2; suggesting the association with the dynein-dynactin motor complex. Associates with kinesin motor complexes. Interacts with TMEM67. Interacts (via KASH domain) with TMEM258. Interacts with BROX; this interaction promotes SYN2 ubiquitination and facilitates the relaxation of mechanical stress imposed by compressive actin fibers at the rupture site. In terms of processing, the disulfid bond with SUN2 is required for stability of the SUN2:SYNE2/KASH2 LINC complex under tensile forces though not required for the interaction. Post-translationally, ubiquitinated, targeting it for degradation. Widely expressed, with higher level in kidney, adult and fetal liver, stomach and placenta. Weakly expressed in skeletal muscle and brain. Isoform 5 is highly expressed in pancreas, skeletal muscle and heart.

Its subcellular location is the nucleus outer membrane. The protein localises to the sarcoplasmic reticulum membrane. The protein resides in the cell membrane. It localises to the cytoplasm. It is found in the cytoskeleton. Its subcellular location is the mitochondrion. The protein localises to the nucleus. The protein resides in the nucleoplasm. It localises to the myofibril. It is found in the sarcomere. Its subcellular location is the z line. The protein localises to the cell junction. The protein resides in the focal adhesion. Its function is as follows. Multi-isomeric modular protein which forms a linking network between organelles and the actin cytoskeleton to maintain the subcellular spatial organization. As a component of the LINC (LInker of Nucleoskeleton and Cytoskeleton) complex involved in the connection between the nuclear lamina and the cytoskeleton. The nucleocytoplasmic interactions established by the LINC complex play an important role in the transmission of mechanical forces across the nuclear envelope and in nuclear movement and positioning. Specifically, SYNE2 and SUN2 assemble in arrays of transmembrane actin-associated nuclear (TAN) lines which are bound to F-actin cables and couple the nucleus to retrograde actin flow during actin-dependent nuclear movement. May be involved in nucleus-centrosome attachment. During interkinetic nuclear migration (INM) at G2 phase and nuclear migration in neural progenitors its LINC complex association with SUN1/2 and probable association with cytoplasmic dynein-dynactin motor complexes functions to pull the nucleus toward the centrosome; SYNE1 and SYNE2 may act redundantly. During INM at G1 phase mediates respective LINC complex association with kinesin to push the nucleus away from the centrosome. Involved in nuclear migration in retinal photoreceptor progenitors. Required for centrosome migration to the apical cell surface during early ciliogenesis. Facilitates the relaxation of mechanical stress imposed by compressive actin fibers at the rupture site through its nteraction with SYN2. The protein is Nesprin-2 of Homo sapiens (Human).